Here is a 206-residue protein sequence, read N- to C-terminus: Pyrrolidone-carboxylate peptidase (206 aa).

Residues E76, C139, and H163 contribute to the active site.

The protein belongs to the peptidase C15 family. As to quaternary structure, homotetramer.

It is found in the cytoplasm. The enzyme catalyses Release of an N-terminal pyroglutamyl group from a polypeptide, the second amino acid generally not being Pro.. In terms of biological role, removes 5-oxoproline from various penultimate amino acid residues except L-proline. This is Pyrrolidone-carboxylate peptidase (pcp) from Pyrococcus horikoshii (strain ATCC 700860 / DSM 12428 / JCM 9974 / NBRC 100139 / OT-3).